Reading from the N-terminus, the 1484-residue chain is Chromosome partition protein MukB (1484 aa).

ATP is bound at residue 34 to 41 (GGNGAGKS). Coiled coils occupy residues 326–418 (LEAD…QYNQ), 444–472 (LDTFQAKEQEATEKLLSLEQKMSVAQTAH), and 509–602 (RHLA…QRAP). Residues 666 to 783 (PGGAEDQRLN…SLPIFGRAAR (118 aa)) form a flexible hinge region. Coiled-coil stretches lie at residues 835–923 (EAEI…AKLE), 977–1116 (EMLS…AKAG), and 1209–1265 (VEAI…LQSV). Positions 1049–1074 (ADSGAEERARQRRDELHAQLSNNRSR) are disordered. Over residues 1051-1065 (SGAEERARQRRDELH) the composition is skewed to basic and acidic residues.

This sequence belongs to the SMC family. MukB subfamily. In terms of assembly, homodimerization via its hinge domain. Binds to DNA via its C-terminal region. Interacts, and probably forms a ternary complex, with MukE and MukF via its C-terminal region. The complex formation is stimulated by calcium or magnesium. Interacts with tubulin-related protein FtsZ.

It is found in the cytoplasm. It localises to the nucleoid. In terms of biological role, plays a central role in chromosome condensation, segregation and cell cycle progression. Functions as a homodimer, which is essential for chromosome partition. Involved in negative DNA supercoiling in vivo, and by this means organize and compact chromosomes. May achieve or facilitate chromosome segregation by condensation DNA from both sides of a centrally located replisome during cell division. This is Chromosome partition protein MukB from Salmonella dublin (strain CT_02021853).